The following is a 154-amino-acid chain: Large ribosomal subunit protein uL15 (154 aa).

The interval 1 to 44 is disordered; sequence MKLNELGNCKGATRNRKRVGRGIGSGTGKTSGRGVKGQKSRSGV. Residues 21–35 show a composition bias toward gly residues; that stretch reads RGIGSGTGKTSGRGV.

Belongs to the universal ribosomal protein uL15 family. Part of the 50S ribosomal subunit.

In terms of biological role, binds to the 23S rRNA. This is Large ribosomal subunit protein uL15 from Bartonella quintana (strain Toulouse) (Rochalimaea quintana).